Consider the following 481-residue polypeptide: Aspartyl/glutamyl-tRNA(Asn/Gln) amidotransferase subunit B (481 aa).

Belongs to the GatB/GatE family. GatB subfamily. Heterotrimer of A, B and C subunits.

The catalysed reaction is L-glutamyl-tRNA(Gln) + L-glutamine + ATP + H2O = L-glutaminyl-tRNA(Gln) + L-glutamate + ADP + phosphate + H(+). It catalyses the reaction L-aspartyl-tRNA(Asn) + L-glutamine + ATP + H2O = L-asparaginyl-tRNA(Asn) + L-glutamate + ADP + phosphate + 2 H(+). In terms of biological role, allows the formation of correctly charged Asn-tRNA(Asn) or Gln-tRNA(Gln) through the transamidation of misacylated Asp-tRNA(Asn) or Glu-tRNA(Gln) in organisms which lack either or both of asparaginyl-tRNA or glutaminyl-tRNA synthetases. The reaction takes place in the presence of glutamine and ATP through an activated phospho-Asp-tRNA(Asn) or phospho-Glu-tRNA(Gln). This Pseudomonas aeruginosa (strain LESB58) protein is Aspartyl/glutamyl-tRNA(Asn/Gln) amidotransferase subunit B.